Reading from the N-terminus, the 88-residue chain is Defensin-like protein 267 (88 aa).

A signal peptide spans 1-23 (MMLSKVVLLALLLSLSCLWVAKA). Disulfide bonds link Cys45–Cys63, Cys51–Cys68, and Cys55–Cys70.

Belongs to the DEFL family.

The protein localises to the secreted. The protein is Defensin-like protein 267 of Arabidopsis thaliana (Mouse-ear cress).